A 426-amino-acid polypeptide reads, in one-letter code: Enolase (426 aa).

Q163 contacts (2R)-2-phosphoglycerate. The active-site Proton donor is E205. Positions 242, 283, and 310 each coordinate Mg(2+). 4 residues coordinate (2R)-2-phosphoglycerate: K335, R364, S365, and K386. K335 serves as the catalytic Proton acceptor.

This sequence belongs to the enolase family. It depends on Mg(2+) as a cofactor.

Its subcellular location is the cytoplasm. It is found in the secreted. The protein resides in the cell surface. The enzyme catalyses (2R)-2-phosphoglycerate = phosphoenolpyruvate + H2O. It functions in the pathway carbohydrate degradation; glycolysis; pyruvate from D-glyceraldehyde 3-phosphate: step 4/5. Its function is as follows. Catalyzes the reversible conversion of 2-phosphoglycerate (2-PG) into phosphoenolpyruvate (PEP). It is essential for the degradation of carbohydrates via glycolysis. The sequence is that of Enolase from Leifsonia xyli subsp. xyli (strain CTCB07).